The primary structure comprises 182 residues: Lipoprotein signal peptidase (182 aa).

Transmembrane regions (helical) follow at residues 12 to 32 (VAVFACVAAAALIVDQLTKAW), 68 to 88 (ATWVISLLAVVACVALAVAGV), and 91 to 111 (VSMKWSVAISFAFAGALGNLI). Catalysis depends on residues Asp127 and Asp140. A helical membrane pass occupies residues 135–155 (VGNVADIYLVVAGVVLVILIL).

It belongs to the peptidase A8 family.

It localises to the cell membrane. The enzyme catalyses Release of signal peptides from bacterial membrane prolipoproteins. Hydrolyzes -Xaa-Yaa-Zaa-|-(S,diacylglyceryl)Cys-, in which Xaa is hydrophobic (preferably Leu), and Yaa (Ala or Ser) and Zaa (Gly or Ala) have small, neutral side chains.. It participates in protein modification; lipoprotein biosynthesis (signal peptide cleavage). Functionally, this protein specifically catalyzes the removal of signal peptides from prolipoproteins. The polypeptide is Lipoprotein signal peptidase (Bifidobacterium longum (strain DJO10A)).